A 301-amino-acid polypeptide reads, in one-letter code: Polyamine aminopropyltransferase (301 aa).

Residues 4-240 (WHWLLEWQTP…GLWGFVYGGV (237 aa)) enclose the PABS domain. Residue Gln33 coordinates S-methyl-5'-thioadenosine. Residues His64 and Glu89 each coordinate spermidine. S-methyl-5'-thioadenosine-binding positions include Asp109 and 141–142 (DG). The active-site Proton acceptor is the Asp159.

This sequence belongs to the spermidine/spermine synthase family. In terms of assembly, homodimer or homotetramer.

The protein resides in the cytoplasm. It catalyses the reaction S-adenosyl 3-(methylsulfanyl)propylamine + putrescine = S-methyl-5'-thioadenosine + spermidine + H(+). It functions in the pathway amine and polyamine biosynthesis; spermidine biosynthesis; spermidine from putrescine: step 1/1. Its function is as follows. Catalyzes the irreversible transfer of a propylamine group from the amino donor S-adenosylmethioninamine (decarboxy-AdoMet) to putrescine (1,4-diaminobutane) to yield spermidine. The chain is Polyamine aminopropyltransferase from Saccharolobus islandicus (strain Y.N.15.51 / Yellowstone #2) (Sulfolobus islandicus).